We begin with the raw amino-acid sequence, 369 residues long: Putative 2-aminoethylphosphonate import ATP-binding protein PhnT (369 aa).

In terms of domain architecture, ABC transporter spans 19-250 (IVLDSLRVAY…PPNRFASEFL (232 aa)). 51-58 (GPSGSGKT) contacts ATP.

It belongs to the ABC transporter superfamily. 2-aminoethylphosphonate importer (TC 3.A.1.11.5) family.

It is found in the cell inner membrane. Its function is as follows. Probably part of the PhnSTUV complex (TC 3.A.1.11.5) involved in 2-aminoethylphosphonate import. Probably responsible for energy coupling to the transport system. This Salmonella choleraesuis (strain SC-B67) protein is Putative 2-aminoethylphosphonate import ATP-binding protein PhnT (phnT).